We begin with the raw amino-acid sequence, 38 residues long: Photosystem II reaction center protein L (38 aa).

The chain crosses the membrane as a helical span at residues 17 to 37 (SLFWGLLLIFVLAVLFSSYFF).

The protein belongs to the PsbL family. PSII is composed of 1 copy each of membrane proteins PsbA, PsbB, PsbC, PsbD, PsbE, PsbF, PsbH, PsbI, PsbJ, PsbK, PsbL, PsbM, PsbT, PsbX, PsbY, PsbZ, Psb30/Ycf12, at least 3 peripheral proteins of the oxygen-evolving complex and a large number of cofactors. It forms dimeric complexes.

It localises to the plastid. The protein localises to the chloroplast thylakoid membrane. Its function is as follows. One of the components of the core complex of photosystem II (PSII). PSII is a light-driven water:plastoquinone oxidoreductase that uses light energy to abstract electrons from H(2)O, generating O(2) and a proton gradient subsequently used for ATP formation. It consists of a core antenna complex that captures photons, and an electron transfer chain that converts photonic excitation into a charge separation. This subunit is found at the monomer-monomer interface and is required for correct PSII assembly and/or dimerization. This is Photosystem II reaction center protein L from Zygnema circumcarinatum (Green alga).